The following is a 206-amino-acid chain: Triafestin-1 (206 aa).

A signal peptide spans 1–18 (MKTILAVIFFGILAFAFA). Asn-55 carries an N-linked (GlcNAc...) asparagine glycan.

The protein belongs to the calycin superfamily. Triabin family. Interacts with host coagulation factor XII (F12) (inactive and activated) (via amino acids 1-77). Interacts with host high molecular weight kininogen (KNG1) (via amino acids 402-532). As to expression, salivary gland (at protein level).

Its subcellular location is the secreted. With respect to regulation, zn(2+) modulates binding to host coagulation factor XII (F12) and high molecular weight kininogen (KNG1). Functionally, suppresses activation of the host plasma kallikrein-kinin system, leading to inhibition of the intrinsic coagulation pathway. Blocks host coagulation factor XII (F12) and prekallikrein (KLKB1) reciprocal activation without affecting their amidolytic activities. Blocks binding of host F12 and high molecular weight kininogen (KNG1) to negatively charged surfaces. Attenuates generation of bradykinin by interfering with activation of host kallikrein-kinin system. The polypeptide is Triafestin-1 (Triatoma infestans (Assassin bug)).